A 209-amino-acid chain; its full sequence is MEGDGPAATAPQYQPVCPTRDACVYNSCYCEENIWKLCEYIKTHNQYLLEECYAVFISNEKKMVPIWKQQARPENGPVIWDYHVVLLHVSREGQSFIYDLDTILPFPCPFDIYIEDALKSDDDIHLQFRRKFRVVRADSYLKHFASDRSHMKDSSGNWREPPPEYPCIETGDSKMNLNDFISMDPAVGWGAVYTLPEFVHRFSSKTYQA.

Residues cysteine 30, histidine 83, and aspartate 99 contribute to the active site.

Belongs to the NTAQ1 family. In terms of assembly, monomer. Widely expressed.

It localises to the cytoplasm. Its subcellular location is the cytosol. The protein localises to the nucleus. The catalysed reaction is N-terminal L-glutaminyl-[protein] + H2O = N-terminal L-glutamyl-[protein] + NH4(+). Its function is as follows. Mediates the side-chain deamidation of N-terminal glutamine residues to glutamate, an important step in N-end rule pathway of protein degradation. Conversion of the resulting N-terminal glutamine to glutamate renders the protein susceptible to arginylation, polyubiquitination and degradation as specified by the N-end rule. Does not act on substrates with internal or C-terminal glutamine and does not act on non-glutamine residues in any position. Does not deaminate acetylated N-terminal glutamine. With the exception of proline, all tested second-position residues on substrate peptides do not greatly influence the activity. In contrast, a proline at position 2, virtually abolishes deamidation of N-terminal glutamine. In Mus musculus (Mouse), this protein is Protein N-terminal glutamine amidohydrolase (Ntaq1).